Consider the following 305-residue polypeptide: Tyrosine recombinase XerD (305 aa).

The Core-binding (CB) domain occupies 1–83 (MEFISQFLEM…TIKSYYEFLI (83 aa)). The region spanning 104–298 (KLPEILSIDD…QTNHLKKALL (195 aa)) is the Tyr recombinase domain. Catalysis depends on residues arginine 145, lysine 175, histidine 250, arginine 253, and histidine 276. The O-(3'-phospho-DNA)-tyrosine intermediate role is filled by tyrosine 285.

It belongs to the 'phage' integrase family. XerD subfamily. In terms of assembly, forms a cyclic heterotetrameric complex composed of two molecules of XerC and two molecules of XerD.

The protein resides in the cytoplasm. Its function is as follows. Site-specific tyrosine recombinase, which acts by catalyzing the cutting and rejoining of the recombining DNA molecules. The XerC-XerD complex is essential to convert dimers of the bacterial chromosome into monomers to permit their segregation at cell division. It also contributes to the segregational stability of plasmids. The chain is Tyrosine recombinase XerD from Rickettsia bellii (strain RML369-C).